A 262-amino-acid chain; its full sequence is Cutinase 1 (262 aa).

Y61 is a binding site for poly(ethylene terephthalate). The active-site Nucleophile is the S131. The poly(ethylene terephthalate) site is built by M132 and W156. Active-site charge relay system residues include D177 and H209. An intrachain disulfide couples C242 to C260.

This sequence belongs to the AB hydrolase superfamily.

Its subcellular location is the secreted. The protein resides in the periplasm. It catalyses the reaction (ethylene terephthalate)(n) + H2O = (ethylene terephthalate)(n-1) + 4-[(2-hydroxyethoxy)carbonyl]benzoate + H(+). The catalysed reaction is a butanoate ester + H2O = an aliphatic alcohol + butanoate + H(+). It carries out the reaction an acetyl ester + H2O = an aliphatic alcohol + acetate + H(+). The enzyme catalyses cutin + H2O = cutin monomers.. In terms of biological role, catalyzes the hydrolysis of cutin, a polyester that forms the structure of plant cuticle. Shows esterase activity towards p-nitrophenol-linked aliphatic esters (pNP-aliphatic esters). Capable of degrading the plastic poly(ethylene terephthalate) (PET), the most abundant polyester plastic in the world. Capable of degrading the bioplastic poly(lactic acid) (PLLA). This is Cutinase 1 from Thermobifida cellulosilytica.